We begin with the raw amino-acid sequence, 106 residues long: MTKVLVVVALLVTLISYSSSEGIDDLEADELLSLMANEQTRAKACTPRYYDCSHDRHSCCRSSMFKDVCTCFYPEGGDNKEVCTCQQPKHLKYMEKATDKIKNLFG.

The signal sequence occupies residues 1-20; that stretch reads MTKVLVVVALLVTLISYSSS. Positions 21–41 are excised as a propeptide; it reads EGIDDLEADELLSLMANEQTR. 4 disulfides stabilise this stretch: Cys45–Cys60, Cys52–Cys69, Cys59–Cys85, and Cys71–Cys83.

This sequence belongs to the neurotoxin 19 (CSTX) family. 02 (D7) subfamily. As to expression, expressed by the venom gland.

The protein resides in the secreted. The chain is Toxin-like structure LSTX-D8 from Lycosa singoriensis (Wolf spider).